A 352-amino-acid chain; its full sequence is ATPase GET3 (352 aa).

26 to 33 (KGGVGKTT) contacts ATP. The active site involves aspartate 57. 2 residues coordinate ATP: glutamate 243 and asparagine 270. Residues cysteine 283 and cysteine 286 each contribute to the Zn(2+) site.

The protein belongs to the arsA ATPase family. Homodimer. Component of the Golgi to ER traffic (GET) complex, which is composed of GET1, GET2 and GET3. Within the complex, GET1 and GET2 form a heterotetramer which is stabilized by phosphatidylinositol binding and which binds to the GET3 homodimer. Interacts with the chloride channel protein GEF1.

The protein resides in the cytoplasm. Its subcellular location is the endoplasmic reticulum. The protein localises to the golgi apparatus. ATPase required for the post-translational delivery of tail-anchored (TA) proteins to the endoplasmic reticulum. Recognizes and selectively binds the transmembrane domain of TA proteins in the cytosol. This complex then targets to the endoplasmic reticulum by membrane-bound receptors GET1 and GET2, where the tail-anchored protein is released for insertion. This process is regulated by ATP binding and hydrolysis. ATP binding drives the homodimer towards the closed dimer state, facilitating recognition of newly synthesized TA membrane proteins. ATP hydrolysis is required for insertion. Subsequently, the homodimer reverts towards the open dimer state, lowering its affinity for the GET1-GET2 receptor, and returning it to the cytosol to initiate a new round of targeting. Cooperates with the HDEL receptor ERD2 to mediate the ATP-dependent retrieval of resident ER proteins that contain a C-terminal H-D-E-L retention signal from the Golgi to the ER. Involved in low-level resistance to the oxyanions arsenite and arsenate, and in heat tolerance. In Vanderwaltozyma polyspora (strain ATCC 22028 / DSM 70294 / BCRC 21397 / CBS 2163 / NBRC 10782 / NRRL Y-8283 / UCD 57-17) (Kluyveromyces polysporus), this protein is ATPase GET3.